Reading from the N-terminus, the 453-residue chain is Enolase (453 aa).

Glutamine 163 provides a ligand contact to (2R)-2-phosphoglycerate. Catalysis depends on glutamate 205, which acts as the Proton donor. Residues aspartate 258, glutamate 308, and aspartate 335 each contribute to the Mg(2+) site. Residues lysine 360, arginine 389, serine 390, and lysine 411 each contribute to the (2R)-2-phosphoglycerate site. Residue lysine 360 is the Proton acceptor of the active site.

This sequence belongs to the enolase family. Mg(2+) is required as a cofactor.

It is found in the cytoplasm. The protein resides in the secreted. The protein localises to the cell surface. It catalyses the reaction (2R)-2-phosphoglycerate = phosphoenolpyruvate + H2O. Its pathway is carbohydrate degradation; glycolysis; pyruvate from D-glyceraldehyde 3-phosphate: step 4/5. Functionally, catalyzes the reversible conversion of 2-phosphoglycerate (2-PG) into phosphoenolpyruvate (PEP). It is essential for the degradation of carbohydrates via glycolysis. The sequence is that of Enolase from Mesoplasma florum (strain ATCC 33453 / NBRC 100688 / NCTC 11704 / L1) (Acholeplasma florum).